The sequence spans 391 residues: Chaperone protein DnaJ (391 aa).

In terms of domain architecture, J spans 2–67; the sequence is DYYDVLGVSK…QKRESYDRYG (66 aa). The segment at 148 to 226 adopts a CR-type zinc-finger fold; it reads GVEKELLVSG…CRGQGRVKDK (79 aa). Residues Cys161, Cys164, Cys178, Cys181, Cys200, Cys203, Cys214, and Cys217 each contribute to the Zn(2+) site. CXXCXGXG motif repeat units follow at residues 161–168, 178–185, 200–207, and 214–221; these read CTTCSGSG, CERCKGSG, CPECGGEG, and CSNCRGQG.

The protein belongs to the DnaJ family. In terms of assembly, homodimer. The cofactor is Zn(2+).

Its subcellular location is the cytoplasm. Functionally, participates actively in the response to hyperosmotic and heat shock by preventing the aggregation of stress-denatured proteins and by disaggregating proteins, also in an autonomous, DnaK-independent fashion. Unfolded proteins bind initially to DnaJ; upon interaction with the DnaJ-bound protein, DnaK hydrolyzes its bound ATP, resulting in the formation of a stable complex. GrpE releases ADP from DnaK; ATP binding to DnaK triggers the release of the substrate protein, thus completing the reaction cycle. Several rounds of ATP-dependent interactions between DnaJ, DnaK and GrpE are required for fully efficient folding. Also involved, together with DnaK and GrpE, in the DNA replication of plasmids through activation of initiation proteins. This is Chaperone protein DnaJ from Chlamydia felis (strain Fe/C-56) (Chlamydophila felis).